The following is a 252-amino-acid chain: MSLLTEVETYVLSIVPSGPLKAEIAQRLEDVFAGKNTDLEALMEWLKTRPILSPLTKGILGFVFTLTVPSERGLQRRRFVQNALNGNGDPNNMDRAVKLYRKLKREITFHGAKEIALSYSAGALASCMGLIYNRMGAVTTEVAFGLVCATCEQIADSQHRSHRQMVTTTNPLIRHENRMVLASTTAKAMEQMAGSSEQAAEAMEVASQARQMVQAMRAIGTHPSSSAGLKNDLLENLQAYQKRMGVQMQRFK.

A membrane-binding region spans residues 1 to 164 (MSLLTEVETY…ADSQHRSHRQ (164 aa)). Positions 101-105 (RKLKR) match the Nuclear localization signal motif. Positions 165–252 (MVTTTNPLIR…RMGVQMQRFK (88 aa)) are RNP-binding.

The protein belongs to the influenza viruses Matrix protein M1 family. Homodimer and homomultimer. Interacts with NEP. Binds ribonucleocapsid by both interacting with genomic RNA and NP protein. May interact with HA and NA. Cannot bind NP without genomic RNA.

It is found in the virion membrane. The protein resides in the host nucleus. Its function is as follows. Plays critical roles in virus replication, from virus entry and uncoating to assembly and budding of the virus particle. M1 binding to ribonucleocapsids (RNPs) in nucleus seems to inhibit viral transcription. Interaction of viral NEP with M1-RNP is thought to promote nuclear export of the complex, which is targeted to the virion assembly site at the apical plasma membrane in polarized epithelial cells. Interactions with NA and HA may bring M1, a non-raft-associated protein, into lipid rafts. Forms a continuous shell on the inner side of the lipid bilayer in virion, where it binds the RNP. During virus entry into cell, the M2 ion channel acidifies the internal virion core, inducing M1 dissociation from the RNP. M1-free RNPs are transported to the nucleus, where viral transcription and replication can take place. In terms of biological role, determines the virion's shape: spherical or filamentous. Clinical isolates of influenza are characterized by the presence of significant proportion of filamentous virions, whereas after multiple passage on eggs or cell culture, virions have only spherical morphology. Filamentous virions are thought to be important to infect neighboring cells, and spherical virions more suited to spread through aerosol between hosts organisms. In Influenza A virus (strain A/Hickox/1940 H1N1), this protein is Matrix protein 1.